Here is a 569-residue protein sequence, read N- to C-terminus: Zinc finger and BTB domain-containing protein 7A (569 aa).

The BTB domain maps to 34 to 101; the sequence is CDVVILVEGR…AYTATLTVST (68 aa). Positions 214-304 are disordered; it reads YGPGPPADRP…LSGAAEGEDG (91 aa). The segment at 275–569 is mediates interaction with KHDRBS1; sequence EEEAAALSEA…VATAEGNFAT (295 aa). Positions 279-288 are enriched in low complexity; the sequence is AALSEAAPEP. 2 positions are modified to phosphoserine: Ser331 and Ser335. The interval 343–569 is mediates interaction with RELA; it reads MDYYLKYFSG…VATAEGNFAT (227 aa). The mediates interaction with SMAD4 stretch occupies residues 371–569; sequence RAKAFQKCPI…VATAEGNFAT (199 aa). C2H2-type zinc fingers lie at residues 376–398 and 404–426; these read QKCPICEKVIQGAGKLPRHIRTH and YECNICKVRFTRQDKLKVHMRKH. A Glycyl lysine isopeptide (Lys-Gly) (interchain with G-Cter in SUMO2) cross-link involves residue Lys430. The C2H2-type 3 zinc-finger motif lies at 432–454; the sequence is YLCQQCGAAFAHNYDLKNHMRVH. A C2H2-type 4; atypical zinc finger spans residues 460-484; that stretch reads YQCDSCCKTFVRSDHLHRHLKKDGC. The segment at 480-569 is disordered; it reads KKDGCNGVPS…VATAEGNFAT (90 aa). Over residues 498-519 the composition is skewed to low complexity; that stretch reads RGVPPDVPAGAGAPPGLPDAPR. Lys527 is covalently cross-linked (Glycyl lysine isopeptide (Lys-Gly) (interchain with G-Cter in SUMO2)). Ser537 carries the post-translational modification Phosphoserine. Residues 548-557 show a composition bias toward gly residues; it reads GSGGDDGAGG.

As to quaternary structure, homodimer. Interacts with BCL6. Interacts with RELA; involved in the control by RELA of the accessibility of target gene promoters. Interacts with AR (via NR LBD domain); the interaction is direct and androgen-dependent. Interacts with NCOR1. Interacts with NCOR2. Interacts with SMAD4; the interaction is direct and stimulated by TGFB1. Interacts with HDAC1. Interacts with SP1; ZBTB7A prevents the binding to GC-rich motifs in promoters and represses the transcriptional activity of SP1. Interacts with the DNA-dependent protein kinase complex/DNA-PKc. Interacts with KHDRBS1; negatively regulates KHDRBS1 splicing activity. Post-translationally, sumoylated. Undergoes sumoylation with SUMO1 that may regulate its transcriptional activity. Widely expressed. In normal thymus, expressed in medullary epithelial cells and Hassle's corpuscles (at protein level). In the spleen, mainly expressed in the white pulp germinal centers (at protein level). Up-regulated in thymic lymphomas.

Its subcellular location is the nucleus. In terms of biological role, transcription factor that represses the transcription of a wide range of genes involved in cell proliferation and differentiation. Directly and specifically binds to the consensus sequence 5'-[GA][CA]GACCCCCCCCC-3' and represses transcription both by regulating the organization of chromatin and through the direct recruitment of transcription factors to gene regulatory regions. Negatively regulates SMAD4 transcriptional activity in the TGF-beta signaling pathway through these two mechanisms. That is, recruits the chromatin regulator HDAC1 to the SMAD4-DNA complex and in parallel prevents the recruitment of the transcriptional activators CREBBP and EP300. Collaborates with transcription factors like RELA to modify the accessibility of gene transcription regulatory regions to secondary transcription factors. Also directly interacts with transcription factors like SP1 to prevent their binding to DNA. Functions as an androgen receptor/AR transcriptional corepressor by recruiting NCOR1 and NCOR2 to the androgen response elements/ARE on target genes. Thereby, negatively regulates androgen receptor signaling and androgen-induced cell proliferation. Involved in the switch between fetal and adult globin expression during erythroid cells maturation. Through its interaction with the NuRD complex regulates chromatin at the fetal globin genes to repress their transcription. Specifically represses the transcription of the tumor suppressor ARF isoform from the CDKN2A gene. Efficiently abrogates E2F1-dependent CDKN2A transactivation. Regulates chondrogenesis through the transcriptional repression of specific genes via a mechanism that also requires histone deacetylation. Regulates cell proliferation through the transcriptional regulation of genes involved in glycolysis. Involved in adipogenesis through the regulation of genes involved in adipocyte differentiation. Plays a key role in the differentiation of lymphoid progenitors into B and T lineages. Promotes differentiation towards the B lineage by inhibiting the T-cell instructive Notch signaling pathway through the specific transcriptional repression of Notch downstream target genes. Also regulates osteoclast differentiation. May also play a role, independently of its transcriptional activity, in double-strand break repair via classical non-homologous end joining/cNHEJ. Recruited to double-strand break sites on damage DNA, interacts with the DNA-dependent protein kinase complex and directly regulates its stability and activity in DNA repair. May also modulate the splicing activity of KHDRBS1 toward BCL2L1 in a mechanism which is histone deacetylase-dependent and thereby negatively regulates the pro-apoptotic effect of KHDRBS1. The sequence is that of Zinc finger and BTB domain-containing protein 7A from Mus musculus (Mouse).